A 140-amino-acid polypeptide reads, in one-letter code: CDGSH iron-sulfur domain-containing protein 2 homolog (140 aa).

The Lumenal portion of the chain corresponds to 1–35; the sequence is MEAIAKLIKVQLPNYLQKLPVPSSLSGFAELSPSD. Residues 36–59 traverse the membrane as a helical segment; that stretch reads AIAVVFPFAVVSWLIGYSTYKFFQ. Topologically, residues 60–140 are cytoplasmic; it reads PKAVELPPSP…GPLIVKGKAN (81 aa). Residues Cys104, Cys106, Cys115, and His119 each contribute to the [2Fe-2S] cluster site.

It belongs to the CISD protein family. CISD2 subfamily. [2Fe-2S] cluster is required as a cofactor.

It localises to the endoplasmic reticulum membrane. In Trichoplax adhaerens (Trichoplax reptans), this protein is CDGSH iron-sulfur domain-containing protein 2 homolog.